A 906-amino-acid polypeptide reads, in one-letter code: Protein translocase subunit SecA (906 aa).

Residues Gln87, 105-109 (GEGKT), and Asp521 each bind ATP. Over residues 849 to 865 (STATAAEPAPEASQSQS) the composition is skewed to low complexity. The segment at 849–897 (STATAAEPAPEASQSQSTNDATASQNPPITEVEASKVGRNQPCPCGSGK) is disordered. Over residues 866–876 (TNDATASQNPP) the composition is skewed to polar residues. Residues Cys891, Cys893, Cys902, and Cys903 each coordinate Zn(2+).

It belongs to the SecA family. Monomer and homodimer. Part of the essential Sec protein translocation apparatus which comprises SecA, SecYEG and auxiliary proteins SecDF-YajC and YidC. The cofactor is Zn(2+).

The protein resides in the cell inner membrane. Its subcellular location is the cytoplasm. The enzyme catalyses ATP + H2O + cellular proteinSide 1 = ADP + phosphate + cellular proteinSide 2.. In terms of biological role, part of the Sec protein translocase complex. Interacts with the SecYEG preprotein conducting channel. Has a central role in coupling the hydrolysis of ATP to the transfer of proteins into and across the cell membrane, serving both as a receptor for the preprotein-SecB complex and as an ATP-driven molecular motor driving the stepwise translocation of polypeptide chains across the membrane. This Dichelobacter nodosus (strain VCS1703A) protein is Protein translocase subunit SecA.